Here is a 319-residue protein sequence, read N- to C-terminus: MRHVLLIFCAIIATEALLNTGLQLKIDELFDTPGHTNNWAVLVCTSKFWFNYRHVSNVLALYHSIKRLGIPDSNIIMMLAEDVPCNSRNPRPGTVYAARAGTNLYGSDVEVDYRGEEVTVESFIRVLTGRHHPATPRSKRLLTDHQSNVLIYLTGHGGDSFMKFQDSEELTNVDLAYAIQTMFEDNRYHEMLVIADSCRSASMYEWIDSPNVLSLSSSLTHEESYSYDVDTDIGVYVIDRYTHYTVNFLTKEVKALNSSANMQDYIDSCPARKCLSNTGVRKDHYPKDVKRVRVTDFFGSSRIFQHLSEEIVLDDEFWA.

An N-terminal signal peptide occupies residues 1–16; that stretch reads MRHVLLIFCAIIATEA. Active-site residues include His-156 and Cys-198. N-linked (GlcNAc...) asparagine glycosylation occurs at Asn-257.

It belongs to the peptidase C13 family.

It functions in the pathway glycolipid biosynthesis; glycosylphosphatidylinositol-anchor biosynthesis. Its function is as follows. Mediates GPI anchoring in the endoplasmic reticulum, by replacing a protein's C-terminal GPI attachment signal peptide with a pre-assembled GPI. During this transamidation reaction, the GPI transamidase forms a carbonyl intermediate with the substrate protein. The protein is Putative GPI-anchor transamidase of Caenorhabditis elegans.